We begin with the raw amino-acid sequence, 190 residues long: Threonylcarbamoyl-AMP synthase (190 aa).

The YrdC-like domain maps to 7–190 (GDAIAAAIDV…ALTGELFRQG (184 aa)).

Belongs to the SUA5 family. TsaC subfamily.

It localises to the cytoplasm. It catalyses the reaction L-threonine + hydrogencarbonate + ATP = L-threonylcarbamoyladenylate + diphosphate + H2O. Functionally, required for the formation of a threonylcarbamoyl group on adenosine at position 37 (t(6)A37) in tRNAs that read codons beginning with adenine. Catalyzes the conversion of L-threonine, HCO(3)(-)/CO(2) and ATP to give threonylcarbamoyl-AMP (TC-AMP) as the acyladenylate intermediate, with the release of diphosphate. The protein is Threonylcarbamoyl-AMP synthase of Escherichia coli O6:H1 (strain CFT073 / ATCC 700928 / UPEC).